The following is a 456-amino-acid chain: Bifunctional protein GlmU (456 aa).

Residues 1 to 229 (MLNNAMSVVI…LSEVEGVNNR (229 aa)) are pyrophosphorylase. UDP-N-acetyl-alpha-D-glucosamine-binding positions include 11–14 (LAAG), Lys-25, Gln-76, 81–82 (GT), 103–105 (YGD), Gly-140, Glu-154, Asn-169, and Asn-227. Position 105 (Asp-105) interacts with Mg(2+). Asn-227 lines the Mg(2+) pocket. Residues 230–250 (LQLSRLERVYQSEQAEKLLLA) are linker. Residues 251–456 (GVMLRDPARF…EGWRRPVKKK (206 aa)) are N-acetyltransferase. UDP-N-acetyl-alpha-D-glucosamine-binding residues include Arg-333 and Lys-351. His-363 functions as the Proton acceptor in the catalytic mechanism. 2 residues coordinate UDP-N-acetyl-alpha-D-glucosamine: Tyr-366 and Asn-377. Acetyl-CoA-binding positions include Ala-380, 386–387 (NY), Ser-405, Ala-423, and Arg-440.

In the N-terminal section; belongs to the N-acetylglucosamine-1-phosphate uridyltransferase family. The protein in the C-terminal section; belongs to the transferase hexapeptide repeat family. In terms of assembly, homotrimer. Mg(2+) is required as a cofactor.

The protein resides in the cytoplasm. The enzyme catalyses alpha-D-glucosamine 1-phosphate + acetyl-CoA = N-acetyl-alpha-D-glucosamine 1-phosphate + CoA + H(+). It carries out the reaction N-acetyl-alpha-D-glucosamine 1-phosphate + UTP + H(+) = UDP-N-acetyl-alpha-D-glucosamine + diphosphate. It functions in the pathway nucleotide-sugar biosynthesis; UDP-N-acetyl-alpha-D-glucosamine biosynthesis; N-acetyl-alpha-D-glucosamine 1-phosphate from alpha-D-glucosamine 6-phosphate (route II): step 2/2. It participates in nucleotide-sugar biosynthesis; UDP-N-acetyl-alpha-D-glucosamine biosynthesis; UDP-N-acetyl-alpha-D-glucosamine from N-acetyl-alpha-D-glucosamine 1-phosphate: step 1/1. The protein operates within bacterial outer membrane biogenesis; LPS lipid A biosynthesis. Functionally, catalyzes the last two sequential reactions in the de novo biosynthetic pathway for UDP-N-acetylglucosamine (UDP-GlcNAc). The C-terminal domain catalyzes the transfer of acetyl group from acetyl coenzyme A to glucosamine-1-phosphate (GlcN-1-P) to produce N-acetylglucosamine-1-phosphate (GlcNAc-1-P), which is converted into UDP-GlcNAc by the transfer of uridine 5-monophosphate (from uridine 5-triphosphate), a reaction catalyzed by the N-terminal domain. The chain is Bifunctional protein GlmU from Shigella boydii serotype 18 (strain CDC 3083-94 / BS512).